Here is a 296-residue protein sequence, read N- to C-terminus: uncharacterized protein (296 aa).

Positions 129-170 form a coiled coil; the sequence is VKELKDLIRTVADEHMKMKREHEAAMKELTLLINNQKQQQQQ. The tract at residues 165-187 is disordered; that stretch reads KQQQQQPVPMPRNSTATRPKNLA.

This is an uncharacterized protein from Ostreid herpesvirus 1 (isolate France) (OsHV-1).